Reading from the N-terminus, the 222-residue chain is Myosin regulatory light chain 2 (222 aa).

Residues 1–65 form a disordered region; the sequence is MADEKKKVKK…RGSRKSKRAG (65 aa). Ala2 carries the post-translational modification N-acetylalanine. Over residues 19-53 the composition is skewed to low complexity; that stretch reads TSETASEAASEAATPAPAATPAPAASATGSKRASG. Ser66 and Ser67 each carry phosphoserine. EF-hand domains are found at residues 75 to 110, 147 to 180, and 181 to 216; these read KQIAEFKEAFQLMDADKDGIIGKNDLRAAFDSVGKI, DEDEVVIAAFKTFDNDGLIDGDKFREMLMNFGDK, and FTMKEVDDAYDQMVIDDKNQIDTAALIEMLTGKGEE. 4 residues coordinate Ca(2+): Asp88, Asp90, Asp92, and Asp99.

In terms of assembly, myosin is a hexamer of 2 heavy chains and 4 light chains.

In Drosophila melanogaster (Fruit fly), this protein is Myosin regulatory light chain 2 (Mlc2).